The sequence spans 728 residues: Elongation factor 2 (728 aa).

In terms of domain architecture, tr-type G spans 19-261; sequence EQIRNIAIAA…MVAEHFPNPI (243 aa). GTP-binding positions include 28–35, 94–98, and 148–151; these read AHVDHGKT, DTPGH, and NKVD. Residue H596 is modified to Diphthamide.

Belongs to the TRAFAC class translation factor GTPase superfamily. Classic translation factor GTPase family. EF-G/EF-2 subfamily.

The protein resides in the cytoplasm. Functionally, catalyzes the GTP-dependent ribosomal translocation step during translation elongation. During this step, the ribosome changes from the pre-translocational (PRE) to the post-translocational (POST) state as the newly formed A-site-bound peptidyl-tRNA and P-site-bound deacylated tRNA move to the P and E sites, respectively. Catalyzes the coordinated movement of the two tRNA molecules, the mRNA and conformational changes in the ribosome. In Halobacterium salinarum (strain ATCC 29341 / DSM 671 / R1), this protein is Elongation factor 2.